We begin with the raw amino-acid sequence, 704 residues long: Elongation factor G (704 aa).

Positions 10-290 constitute a tr-type G domain; it reads NKVRNIGIMA…AVVDFLPSPL (281 aa). GTP-binding positions include 19 to 26, 83 to 87, and 137 to 140; these read AHIDAGKT, DTPGH, and NKMD. Residues 293-313 are disordered; it reads PPMIGHDPRNEETEMTRKPST. Basic and acidic residues predominate over residues 298–313; that stretch reads HDPRNEETEMTRKPST.

It belongs to the TRAFAC class translation factor GTPase superfamily. Classic translation factor GTPase family. EF-G/EF-2 subfamily.

It localises to the cytoplasm. Functionally, catalyzes the GTP-dependent ribosomal translocation step during translation elongation. During this step, the ribosome changes from the pre-translocational (PRE) to the post-translocational (POST) state as the newly formed A-site-bound peptidyl-tRNA and P-site-bound deacylated tRNA move to the P and E sites, respectively. Catalyzes the coordinated movement of the two tRNA molecules, the mRNA and conformational changes in the ribosome. This Renibacterium salmoninarum (strain ATCC 33209 / DSM 20767 / JCM 11484 / NBRC 15589 / NCIMB 2235) protein is Elongation factor G.